We begin with the raw amino-acid sequence, 427 residues long: Serine hydroxymethyltransferase (427 aa).

120–122 serves as a coordination point for (6S)-5,6,7,8-tetrahydrofolate; it reads GHI. An N6-(pyridoxal phosphate)lysine modification is found at lysine 226.

The protein belongs to the SHMT family. As to quaternary structure, homodimer. Pyridoxal 5'-phosphate is required as a cofactor.

The protein localises to the cytoplasm. The protein operates within amino-acid biosynthesis; glycine biosynthesis; glycine from L-serine: step 1/1. Its function is as follows. Catalyzes the reversible interconversion of serine and glycine with a modified folate serving as the one-carbon carrier. Also exhibits a pteridine-independent aldolase activity toward beta-hydroxyamino acids, producing glycine and aldehydes, via a retro-aldol mechanism. The sequence is that of Serine hydroxymethyltransferase from Pyrococcus abyssi (strain GE5 / Orsay).